The primary structure comprises 200 residues: Cytochrome c biogenesis ATP-binding export protein CcmA (200 aa).

Residues Leu3–Ala200 form the ABC transporter domain. Gly35 to Thr42 contacts ATP.

It belongs to the ABC transporter superfamily. CcmA exporter (TC 3.A.1.107) family. The complex is composed of two ATP-binding proteins (CcmA) and two transmembrane proteins (CcmB).

The protein localises to the cell inner membrane. It carries out the reaction heme b(in) + ATP + H2O = heme b(out) + ADP + phosphate + H(+). Functionally, part of the ABC transporter complex CcmAB involved in the biogenesis of c-type cytochromes; once thought to export heme, this seems not to be the case, but its exact role is uncertain. Responsible for energy coupling to the transport system. This is Cytochrome c biogenesis ATP-binding export protein CcmA from Rhodopseudomonas palustris (strain BisB5).